The sequence spans 159 residues: Transmembrane protein 89 (159 aa).

The first 24 residues, M1 to S24, serve as a signal peptide directing secretion. The Extracellular segment spans residues R25–A63. A helical transmembrane segment spans residues S64–L86. Residues Q87 to G159 lie on the Cytoplasmic side of the membrane. The interval R91 to W110 is disordered.

The protein resides in the membrane. The polypeptide is Transmembrane protein 89 (TMEM89) (Homo sapiens (Human)).